Here is a 535-residue protein sequence, read N- to C-terminus: Bifunctional purine biosynthesis protein PurH (535 aa).

One can recognise an MGS-like domain in the interval 6–151; that stretch reads TRLPIRRALI…KNHKDVAIVV (146 aa).

It belongs to the PurH family.

The catalysed reaction is (6R)-10-formyltetrahydrofolate + 5-amino-1-(5-phospho-beta-D-ribosyl)imidazole-4-carboxamide = 5-formamido-1-(5-phospho-D-ribosyl)imidazole-4-carboxamide + (6S)-5,6,7,8-tetrahydrofolate. It carries out the reaction IMP + H2O = 5-formamido-1-(5-phospho-D-ribosyl)imidazole-4-carboxamide. The protein operates within purine metabolism; IMP biosynthesis via de novo pathway; 5-formamido-1-(5-phospho-D-ribosyl)imidazole-4-carboxamide from 5-amino-1-(5-phospho-D-ribosyl)imidazole-4-carboxamide (10-formyl THF route): step 1/1. It functions in the pathway purine metabolism; IMP biosynthesis via de novo pathway; IMP from 5-formamido-1-(5-phospho-D-ribosyl)imidazole-4-carboxamide: step 1/1. This is Bifunctional purine biosynthesis protein PurH from Pseudomonas paraeruginosa (strain DSM 24068 / PA7) (Pseudomonas aeruginosa (strain PA7)).